The sequence spans 377 residues: Guanine nucleotide-binding protein subunit alpha-13 (377 aa).

S-palmitoyl cysteine attachment occurs at residues C14 and C18. A G-alpha domain is found at 47–377 (RLVKILLLGA…HDNLKQLMLQ (331 aa)). The interval 50-63 (KILLLGAGESGKST) is G1 motif. Residues 58-63 (ESGKST), S173, and 197-200 (LLAR) contribute to the GTP site. S62 serves as a coordination point for Mg(2+). The interval 195-203 (DILLARRPT) is G2 motif. T203 contributes to the Mg(2+) binding site. T203 is subject to Phosphothreonine. The tract at residues 218 to 227 (FKMVDVGGQR) is G3 motif. Residues 287 to 294 (ILFLNKTD) are G4 motif. GTP contacts are provided by residues 291-294 (NKTD) and A349. The interval 347 to 352 (TTAINT) is G5 motif.

This sequence belongs to the G-alpha family. G(12) subfamily. As to quaternary structure, g proteins are composed of 3 units; alpha, beta and gamma. The alpha chain contains the guanine nucleotide binding site. Interacts with UBXD5. Interacts with HAX1. Interacts (in GTP-bound form) with PPP5C (via TPR repeats); activates PPP5C phosphatase activity and translocates PPP5C to the cell membrane. Interacts with RGS22. Interacts (in GTP-bound form) with ARHGEF1. Interacts (in GTP-bound form) with ARHGEF11 (via RGS domain). Interacts (in GTP-bound form) with ARHGEF12 (via RGS domain). Interacts with CTNND1. Interacts with GAS2L2. Interacts with GPR35. Interacts with GPR174. In terms of processing, phosphorylation on Thr-203 destabilizes the heterotrimer of alpha, beta and gamma, and inhibits Rho activation. As to expression, expressed in brain and testis, as well as in kidney and sperm (at protein level).

Its subcellular location is the membrane. It localises to the melanosome. It is found in the cytoplasm. The protein localises to the nucleus. In terms of biological role, guanine nucleotide-binding proteins (G proteins) are involved as modulators or transducers in various transmembrane signaling systems. Activates effector molecule RhoA by binding and activating RhoGEFs (ARHGEF1/p115RhoGEF, ARHGEF11/PDZ-RhoGEF and ARHGEF12/LARG). GNA13-dependent Rho signaling subsequently regulates transcription factor AP-1 (activating protein-1). Promotes tumor cell invasion and metastasis by activating Rho/ROCK signaling pathway. Inhibits CDH1-mediated cell adhesion in a process independent from Rho activation. In lymphoid follicles, transmits P2RY8- and S1PR2-dependent signals that lead to inhibition of germinal center (GC) B cell growth and migration outside the GC niche. This is Guanine nucleotide-binding protein subunit alpha-13 (Gna13) from Mus musculus (Mouse).